A 392-amino-acid chain; its full sequence is MDPTDLSFSPDEINKLIETGLNTVEYFTSQQVTGTSSLGKNTIPPGVTGLLTNAAEAKIQESTNHQKGSVGGGAKPKKPRPKIAIVPADDKTVPGKPIPNPLLGLDSTPSTQTVLDLSGKTLPSGSYKGVKLAKFGKENLMTRFIEEPRENPIATSSPIDFKRGAGIPAGSIEGSTQSDGWEMKSRSLSGAIHPVLQSPLQQGDLNALVTSVQSLALNVNEILNTVRNLDSRMNQLETKVDRILSSQSLIQTIKNDIVGLKAGMATLEGMITTVKIMDPGVPSNVTVEDVRKTLSNHAVVVPESFNDSFLTQSEDVISLDELARPTATSVKKIVRKVPPQKDLTGLKITLEQLAKDCISKPKMREEYLLKINQASSEAQLIDLKKAIIRSAI.

2 disordered regions span residues 61 to 107 (ESTN…GLDS) and 152 to 182 (PIAT…DGWE). A multimerization region spans residues 217–280 (LNVNEILNTV…ITTVKIMDPG (64 aa)). Residues 219–246 (VNEILNTVRNLDSRMNQLETKVDRILSS) adopt a coiled-coil conformation.

The protein belongs to the rubulavirus/avulavirus P protein family. Homotetramer. Interacts (via multimerization domain) with polymerase L; this interaction forms the polymerase L-P complex. Interacts (via N-terminus) with N0 (via Ncore); this interaction allows P to chaperon N0 to avoid N polymerization before encapsidation. Interacts (via C-terminus) with N-RNA template; this interaction positions the polymerase on the template for both transcription and replication.

Essential cofactor of the RNA polymerase L that plays a central role in the transcription and replication by forming the polymerase complex with RNA polymerase L and recruiting L to the genomic N-RNA template for RNA synthesis. Also plays a central role in the encapsidation of nascent RNA chains by forming the encapsidation complex with the nucleocapsid protein N (N-P complex). Acts as a chaperone for newly synthesized free N protein, so-called N0, allowing encapsidation of nascent RNA chains during replication. The nucleoprotein protein N prevents excessive phosphorylation of P, which leads to down-regulation of viral transcription/ replication. Participates, together with N, in the formation of viral factories (viroplasms), which are large inclusions in the host cytoplasm where replication takes place. In Canis lupus familiaris (Dog), this protein is Phosphoprotein (P/V).